A 125-amino-acid polypeptide reads, in one-letter code: Small ribosomal subunit protein uS13 (125 aa).

The interval 92–125 (RHRRGLPVRGQRTRTNARTRKGKKKTVGAQAKKK) is disordered.

It belongs to the universal ribosomal protein uS13 family. In terms of assembly, part of the 30S ribosomal subunit. Forms a loose heterodimer with protein S19. Forms two bridges to the 50S subunit in the 70S ribosome.

Located at the top of the head of the 30S subunit, it contacts several helices of the 16S rRNA. In the 70S ribosome it contacts the 23S rRNA (bridge B1a) and protein L5 of the 50S subunit (bridge B1b), connecting the 2 subunits; these bridges are implicated in subunit movement. Contacts the tRNAs in the A and P-sites. This chain is Small ribosomal subunit protein uS13, found in Akkermansia muciniphila (strain ATCC BAA-835 / DSM 22959 / JCM 33894 / BCRC 81048 / CCUG 64013 / CIP 107961 / Muc).